Here is a 159-residue protein sequence, read N- to C-terminus: Gigasin-1 (159 aa).

2 disordered regions span residues 1 to 33 (GKATTKKVEIPERDRYDNGYDNHGHDDFEHDQT) and 80 to 159 (KESY…KYRR).

Component of the organic matrix of calcified shell layers.

The protein is Gigasin-1 of Magallana gigas (Pacific oyster).